The sequence spans 405 residues: Octaketide synthase 3 (405 aa).

Residues 1–10 (MGSIAESSPL) show a composition bias toward polar residues. Residues 1–22 (MGSIAESSPLMSRENVEGIRKA) form a disordered region. Cys-176 is a catalytic residue. CoA contacts are provided by residues Ser-283 and 320-323 (GGRA).

The protein belongs to the thiolase-like superfamily. Chalcone/stilbene synthases family. As to quaternary structure, homodimer.

It participates in secondary metabolite biosynthesis; flavonoid biosynthesis. Functionally, catalyzes the iterative condensations of 8 molecules of malonyl-CoA to produce aromatic octaketides, SEK4 and SEK4b, the products of the minimal polyketide synthase for the benzoisochromanequinone actinorhodin. May be involved in the biosynthesis of the octaketide barbaloin. This is Octaketide synthase 3 (PKS5) from Aloe arborescens (Kidachi aloe).